A 206-amino-acid polypeptide reads, in one-letter code: Uridine kinase (206 aa).

9 to 16 contributes to the ATP binding site; that stretch reads GGSGSGKT.

It belongs to the uridine kinase family.

It localises to the cytoplasm. The enzyme catalyses uridine + ATP = UMP + ADP + H(+). It catalyses the reaction cytidine + ATP = CMP + ADP + H(+). It participates in pyrimidine metabolism; CTP biosynthesis via salvage pathway; CTP from cytidine: step 1/3. It functions in the pathway pyrimidine metabolism; UMP biosynthesis via salvage pathway; UMP from uridine: step 1/1. This chain is Uridine kinase, found in Borrelia turicatae (strain 91E135).